A 109-amino-acid chain; its full sequence is MVQLSKTGVRDTLKAGHPPAVKAGGKRVVKKSADENANVEKETRKTDKPRSVLAPSRMQHLSLLLSGPLEKLGHDFPETPVSVRHSRVRPSVEKPHISRIPCIQQPRKF.

Disordered stretches follow at residues 1–51 (MVQL…KPRS) and 76–100 (FPET…ISRI). Residues 31–50 (KSADENANVEKETRKTDKPR) show a composition bias toward basic and acidic residues.

This sequence belongs to the DAP-DAPL1 family. As to quaternary structure, associates with ribosomes; preventing translation. Interacts with eiF5a (eif5a and eif5a2); preventing translation.

In terms of biological role, ribosome-binding protein that promotes ribosome hibernation, a process during which ribosomes are stabilized in an inactive state and preserved from proteasomal degradation. Acts via its association with eiF5a (eif5a and eif5a2) at the polypeptide exit tunnel of the ribosome, preventing mRNA translation. Plays a key role in ribosome hibernation in the mature egg by preventing mRNA translation, leading to ribosome inactivation. Ribosomes, which are produced in large quantities during oogenesis, are stored and translationally repressed in the egg and early embryo. This chain is Death-associated protein-like 1 homolog, found in Danio rerio (Zebrafish).